A 302-amino-acid polypeptide reads, in one-letter code: tRNA pseudouridine synthase B (302 aa).

Aspartate 42 functions as the Nucleophile in the catalytic mechanism.

This sequence belongs to the pseudouridine synthase TruB family. Type 1 subfamily.

It catalyses the reaction uridine(55) in tRNA = pseudouridine(55) in tRNA. Its function is as follows. Responsible for synthesis of pseudouridine from uracil-55 in the psi GC loop of transfer RNAs. The sequence is that of tRNA pseudouridine synthase B from Leifsonia xyli subsp. xyli (strain CTCB07).